The sequence spans 370 residues: Phospho-N-acetylmuramoyl-pentapeptide-transferase (370 aa).

A run of 10 helical transmembrane segments spans residues 29-49, 70-90, 93-113, 133-153, 177-197, 209-229, 251-271, 273-293, 298-318, and 349-369; these read AGLT…SFLL, GTPT…TLLW, LSNW…GLGF, KFIV…YYTG, GPVW…LIGS, GLAS…AYVS, VFLA…CHPA, VFMG…VAIM, ILLV…ILQV, and VIRF…TLKI.

This sequence belongs to the glycosyltransferase 4 family. MraY subfamily. The cofactor is Mg(2+).

It is found in the cell inner membrane. It catalyses the reaction UDP-N-acetyl-alpha-D-muramoyl-L-alanyl-gamma-D-glutamyl-meso-2,6-diaminopimeloyl-D-alanyl-D-alanine + di-trans,octa-cis-undecaprenyl phosphate = di-trans,octa-cis-undecaprenyl diphospho-N-acetyl-alpha-D-muramoyl-L-alanyl-D-glutamyl-meso-2,6-diaminopimeloyl-D-alanyl-D-alanine + UMP. The protein operates within cell wall biogenesis; peptidoglycan biosynthesis. Functionally, catalyzes the initial step of the lipid cycle reactions in the biosynthesis of the cell wall peptidoglycan: transfers peptidoglycan precursor phospho-MurNAc-pentapeptide from UDP-MurNAc-pentapeptide onto the lipid carrier undecaprenyl phosphate, yielding undecaprenyl-pyrophosphoryl-MurNAc-pentapeptide, known as lipid I. The sequence is that of Phospho-N-acetylmuramoyl-pentapeptide-transferase from Leptospira biflexa serovar Patoc (strain Patoc 1 / Ames).